Consider the following 481-residue polypeptide: Glutamate--tRNA ligase (481 aa).

The short motif at 11-21 is the 'HIGH' region element; the sequence is PSPTGLLHIGN. The 'KMSKS' region signature appears at 255–259; sequence KLSKR. Residue lysine 258 participates in ATP binding.

It belongs to the class-I aminoacyl-tRNA synthetase family. Glutamate--tRNA ligase type 1 subfamily. As to quaternary structure, monomer.

Its subcellular location is the cytoplasm. The enzyme catalyses tRNA(Glu) + L-glutamate + ATP = L-glutamyl-tRNA(Glu) + AMP + diphosphate. Catalyzes the attachment of glutamate to tRNA(Glu) in a two-step reaction: glutamate is first activated by ATP to form Glu-AMP and then transferred to the acceptor end of tRNA(Glu). In Streptococcus pyogenes serotype M3 (strain ATCC BAA-595 / MGAS315), this protein is Glutamate--tRNA ligase.